A 1058-amino-acid chain; its full sequence is Carbamoyl phosphate synthase large chain (1058 aa).

A carboxyphosphate synthetic domain region spans residues 1-401; the sequence is MPKRTDIQKI…SLLKACRSLE (401 aa). ATP-binding residues include Arg-129, Arg-169, Gly-175, Gly-176, Arg-208, Ile-210, Glu-215, Gly-241, Ile-242, His-243, Gln-284, and Glu-298. The ATP-grasp 1 domain occupies 133–327; sequence KQLMEELEQP…IAKLAAKIAV (195 aa). Residues Gln-284, Glu-298, and Asn-300 each contribute to the Mg(2+) site. Mn(2+) is bound by residues Gln-284, Glu-298, and Asn-300. The tract at residues 402 to 546 is oligomerization domain; the sequence is IGVHHNEIPE…YSTYGWENES (145 aa). Residues 547–929 are carbamoyl phosphate synthetic domain; it reads IRSDKESVLV…ALYKAFEASY (383 aa). The ATP-grasp 2 domain occupies 671–861; the sequence is EQALKELDIP…MAQVATKLIL (191 aa). Residues Arg-707, Ser-746, Ile-748, Glu-752, Gly-777, Val-778, His-779, Ser-780, Gln-820, and Glu-832 each contribute to the ATP site. The Mg(2+) site is built by Gln-820, Glu-832, and Asn-834. Residues Gln-820, Glu-832, and Asn-834 each contribute to the Mn(2+) site. The region spanning 930–1058 is the MGS-like domain; the sequence is LHLPTFGNVV…ESRSFVTEAI (129 aa). Positions 930 to 1058 are allosteric domain; the sequence is LHLPTFGNVV…ESRSFVTEAI (129 aa).

Belongs to the CarB family. In terms of assembly, composed of two chains; the small (or glutamine) chain promotes the hydrolysis of glutamine to ammonia, which is used by the large (or ammonia) chain to synthesize carbamoyl phosphate. Tetramer of heterodimers (alpha,beta)4. Requires Mg(2+) as cofactor. The cofactor is Mn(2+).

It carries out the reaction hydrogencarbonate + L-glutamine + 2 ATP + H2O = carbamoyl phosphate + L-glutamate + 2 ADP + phosphate + 2 H(+). The catalysed reaction is hydrogencarbonate + NH4(+) + 2 ATP = carbamoyl phosphate + 2 ADP + phosphate + 2 H(+). Its pathway is amino-acid biosynthesis; L-arginine biosynthesis; carbamoyl phosphate from bicarbonate: step 1/1. It functions in the pathway pyrimidine metabolism; UMP biosynthesis via de novo pathway; (S)-dihydroorotate from bicarbonate: step 1/3. Functionally, large subunit of the glutamine-dependent carbamoyl phosphate synthetase (CPSase). CPSase catalyzes the formation of carbamoyl phosphate from the ammonia moiety of glutamine, carbonate, and phosphate donated by ATP, constituting the first step of 2 biosynthetic pathways, one leading to arginine and/or urea and the other to pyrimidine nucleotides. The large subunit (synthetase) binds the substrates ammonia (free or transferred from glutamine from the small subunit), hydrogencarbonate and ATP and carries out an ATP-coupled ligase reaction, activating hydrogencarbonate by forming carboxy phosphate which reacts with ammonia to form carbamoyl phosphate. This chain is Carbamoyl phosphate synthase large chain, found in Streptococcus pneumoniae (strain JJA).